A 268-amino-acid polypeptide reads, in one-letter code: Zinc transporter ZupT (268 aa).

Helical transmembrane passes span 6–26 (IIFA…GGVI), 37–57 (FLAG…FVEI), 73–93 (GGNW…AVID), 126–146 (VLTA…TFVA), 153–173 (IAIP…IAVA), 189–209 (WATL…ILLM), 211–231 (FLGP…MVFI), and 248–268 (TAIY…LLFI). Residues asparagine 136 and glutamate 139 each contribute to the Fe(2+) site. Positions 139 and 164 each coordinate Zn(2+). Fe(2+) contacts are provided by asparagine 165, glutamate 168, and glutamate 197. A Zn(2+)-binding site is contributed by glutamate 168.

It belongs to the ZIP transporter (TC 2.A.5) family. ZupT subfamily.

It localises to the cell membrane. It catalyses the reaction Zn(2+)(in) = Zn(2+)(out). Functionally, mediates zinc uptake. May also transport other divalent cations. The sequence is that of Zinc transporter ZupT from Corynebacterium efficiens (strain DSM 44549 / YS-314 / AJ 12310 / JCM 11189 / NBRC 100395).